Here is a 58-residue protein sequence, read N- to C-terminus: Ranakinin-N (58 aa).

An N-terminal signal peptide occupies residues 1 to 22 (MFTMKKSLLLLFFLGTISMSLC). A propeptide spanning residues 23–43 (EEKRDADEEETEGEAKMEDIK) is cleaved from the precursor. A disordered region spans residues 25–58 (KRDADEEETEGEAKMEDIKRAEAVPPGFTPFRKP). Basic and acidic residues predominate over residues 35 to 46 (GEAKMEDIKRAE).

Expressed by the skin glands.

Its subcellular location is the secreted. In terms of biological role, induces contraction of intestinal smooth muscle in isolated guinea pig ileum. May induce relaxation of arterial smooth muscle. May target bradykinin receptors (BDKRB). Lacks antibacterial activity against the Gram-positive bacterium S.aureus and the Gram-negative bacteria E.coli and B.dysenteria, and antifungal activity against C.albicans. The protein is Ranakinin-N of Hylarana nigrovittata (Black-striped frog).